Consider the following 391-residue polypeptide: Origin recognition complex subunit 2 (391 aa).

Residues M1–K43 form a disordered region. Polar residues predominate over residues F22 to S38.

Belongs to the ORC2 family. ORC is composed of six subunits.

It is found in the nucleus. Its function is as follows. Component of the origin recognition complex (ORC) that binds origins of replication. DNA-binding is ATP-dependent, however specific DNA sequences that define origins of replication have not been identified so far. ORC is required to assemble the pre-replication complex necessary to initiate DNA replication. In Dictyostelium discoideum (Social amoeba), this protein is Origin recognition complex subunit 2 (orcB).